The chain runs to 870 residues: DNA polymerase kappa (870 aa).

The UmuC domain maps to 103–358; the sequence is IVHIDMDAFY…LPIRKVSGIG (256 aa). Mg(2+) contacts are provided by D107, D198, and E199. 2 UBZ4-type zinc fingers span residues 621 to 651 and 776 to 806; these read ILTC…DGPS and ALVC…NKSF. 8 residues coordinate Zn(2+): C624, C627, H642, C646, C779, C782, H797, and C801. Residues 816–858 form a disordered region; the sequence is NPVNQPKESSRSTGSSSGVQKAVTRTKRPGLMTKYSTSKKIKP.

The protein belongs to the DNA polymerase type-Y family. As to quaternary structure, interacts with REV1. Interacts with PCNA. Mg(2+) serves as cofactor. Mn(2+) is required as a cofactor. As to expression, detected at low levels in testis, spleen, prostate and ovary. Detected at very low levels in kidney, colon, brain, heart, liver, lung, placenta, pancreas and peripheral blood leukocytes.

It localises to the nucleus. The enzyme catalyses DNA(n) + a 2'-deoxyribonucleoside 5'-triphosphate = DNA(n+1) + diphosphate. Its function is as follows. DNA polymerase specifically involved in DNA repair. Plays an important role in translesion synthesis, where the normal high-fidelity DNA polymerases cannot proceed and DNA synthesis stalls. Depending on the context, it inserts the correct base, but causes frequent base transitions, transversions and frameshifts. Lacks 3'-5' proofreading exonuclease activity. Forms a Schiff base with 5'-deoxyribose phosphate at abasic sites, but does not have lyase activity. The sequence is that of DNA polymerase kappa (POLK) from Homo sapiens (Human).